Reading from the N-terminus, the 155-residue chain is Ribosomal RNA large subunit methyltransferase H (155 aa).

Residues Leu-72, Gly-103, and 122-127 each bind S-adenosyl-L-methionine; that span reads LSDLTL.

Belongs to the RNA methyltransferase RlmH family. In terms of assembly, homodimer.

The protein resides in the cytoplasm. It carries out the reaction pseudouridine(1915) in 23S rRNA + S-adenosyl-L-methionine = N(3)-methylpseudouridine(1915) in 23S rRNA + S-adenosyl-L-homocysteine + H(+). Its function is as follows. Specifically methylates the pseudouridine at position 1915 (m3Psi1915) in 23S rRNA. In Polaromonas naphthalenivorans (strain CJ2), this protein is Ribosomal RNA large subunit methyltransferase H.